We begin with the raw amino-acid sequence, 325 residues long: Acetyl-coenzyme A carboxylase carboxyl transferase subunit alpha (325 aa).

The CoA carboxyltransferase C-terminal domain maps to E35 to Q292.

This sequence belongs to the AccA family. In terms of assembly, acetyl-CoA carboxylase is a heterohexamer composed of biotin carboxyl carrier protein (AccB), biotin carboxylase (AccC) and two subunits each of ACCase subunit alpha (AccA) and ACCase subunit beta (AccD).

The protein resides in the cytoplasm. The enzyme catalyses N(6)-carboxybiotinyl-L-lysyl-[protein] + acetyl-CoA = N(6)-biotinyl-L-lysyl-[protein] + malonyl-CoA. It participates in lipid metabolism; malonyl-CoA biosynthesis; malonyl-CoA from acetyl-CoA: step 1/1. Component of the acetyl coenzyme A carboxylase (ACC) complex. First, biotin carboxylase catalyzes the carboxylation of biotin on its carrier protein (BCCP) and then the CO(2) group is transferred by the carboxyltransferase to acetyl-CoA to form malonyl-CoA. The polypeptide is Acetyl-coenzyme A carboxylase carboxyl transferase subunit alpha (Geobacillus kaustophilus (strain HTA426)).